A 352-amino-acid polypeptide reads, in one-letter code: Mitochondrial ubiquitin ligase activator of NFKB 1 (352 aa).

Residues 1–8 (MESGSRPS) lie on the Cytoplasmic side of the membrane. The chain crosses the membrane as a helical span at residues 9 to 29 (LGQVILLGTSSMVTAVLYSIY). The Mitochondrial intermembrane segment spans residues 30-238 (RQKAQVAQEL…LLHRQESSVR (209 aa)). A Glycyl lysine isopeptide (Lys-Gly) (interchain with G-Cter in ubiquitin) cross-link involves residue Lys52. Residues 239–259 (LWKILVLVFGFATCATLFFIL) form a helical membrane-spanning segment. Topologically, residues 260-352 (RKQYLHRQER…ITRVIPLYNS (93 aa)) are cytoplasmic. Lys299 participates in a covalent cross-link: Glycyl lysine isopeptide (Lys-Gly) (interchain with G-Cter in ubiquitin). An RING-type zinc finger spans residues 302–340 (CVVCLSNFKSCVFLECGHVCSCRQCYLALPEPKRCPICR).

Homooligomer. Interacts with MAP3K7/TAK1. Interacts with UBC9. Interacts with and sumoylates DNM1L. Interacts with MAVS. Interacts with TP53 (via N-terminus); the interaction leads to ubiquitination and proteasomal degradation of TP53. In terms of processing, ubiquitinated by PRKN during mitophagy, leading to its degradation and enhancement of mitophagy. Deubiquitinated by USP30. Expressed in cortical neurons (at protein level).

Its subcellular location is the mitochondrion outer membrane. The protein localises to the peroxisome. It carries out the reaction S-ubiquitinyl-[E2 ubiquitin-conjugating enzyme]-L-cysteine + [acceptor protein]-L-lysine = [E2 ubiquitin-conjugating enzyme]-L-cysteine + N(6)-ubiquitinyl-[acceptor protein]-L-lysine.. The protein operates within protein modification; protein ubiquitination. It participates in protein modification; protein sumoylation. Its function is as follows. Exhibits weak E3 ubiquitin-protein ligase activity. E3 ubiquitin ligases accept ubiquitin from an E2 ubiquitin-conjugating enzyme in the form of a thioester and then directly transfer the ubiquitin to targeted substrates. Can ubiquitinate AKT1 preferentially at 'Lys-284' involving 'Lys-48'-linked polyubiquitination and seems to be involved in regulation of Akt signaling by targeting phosphorylated Akt to proteasomal degradation. Mediates polyubiquitination of cytoplasmic TP53 at 'Lys-27' which targets TP53 for proteasomal degradation, thus reducing TP53 levels in the cytoplasm and mitochondrion. Proposed to preferentially act as a SUMO E3 ligase at physiological concentrations. Plays a role in the control of mitochondrial morphology by promoting mitochondrial fragmentation, and influences mitochondrial localization. Likely to promote mitochondrial fission through negatively regulating the mitochondrial fusion proteins MFN1 and MFN2, acting in a pathway that is parallel to the PRKN/PINK1 regulatory pathway. May also be involved in the sumoylation of the membrane fission protein DNM1L. Inhibits cell growth. When overexpressed, activates JNK through MAP3K7/TAK1 and induces caspase-dependent apoptosis. Involved in the modulation of innate immune defense against viruses by inhibiting RIGI-dependent antiviral response. Can mediate RIGI sumoylation and disrupt its polyubiquitination. This is Mitochondrial ubiquitin ligase activator of NFKB 1 (Mul1) from Mus musculus (Mouse).